Here is a 90-residue protein sequence, read N- to C-terminus: RNA-binding protein Hfq (90 aa).

One can recognise a Sm domain in the interval aspartate 11 to valine 71.

Belongs to the Hfq family. As to quaternary structure, homohexamer.

Functionally, RNA chaperone that binds small regulatory RNA (sRNAs) and mRNAs to facilitate mRNA translational regulation in response to envelope stress, environmental stress and changes in metabolite concentrations. Also binds with high specificity to tRNAs. In Maricaulis maris (strain MCS10) (Caulobacter maris), this protein is RNA-binding protein Hfq.